Consider the following 623-residue polypeptide: Myosin light chain kinase 2, skeletal/cardiac muscle (623 aa).

Disordered regions lie at residues 1-179 and 204-251; these read MATE…PSCP and GVPV…QGDT. An N-acetylalanine modification is found at alanine 2. Low complexity predominate over residues 20-31; that stretch reads APKAAAGEGPPA. 2 stretches are compositionally biased toward basic and acidic residues: residues 32–43 and 49–89; these read AEKDPGPPDPQK and DPEK…EKGD. Positions 90 to 102 are enriched in low complexity; it reads GASAQPSASSQGP. The segment covering 150–159 has biased composition (basic and acidic residues); it reads GEAKEQKKVA. Phosphoserine occurs at positions 169, 175, and 177. The span at 204–214 shows a compositional bias: low complexity; the sequence is GVPVTPGPTET. Basic and acidic residues predominate over residues 215 to 224; sequence EPAKVAEGEK. Positions 312–567 constitute a Protein kinase domain; it reads LNSKEALGGG…AAQCLAHPWL (256 aa). ATP is bound by residues 318 to 326 and lysine 341; that span reads LGGGKFGAV. Aspartate 433 acts as the Proton acceptor in catalysis. Threonine 472 is subject to Phosphothreonine. Residues 601 to 613 are calmodulin-binding; that stretch reads IAVSAANRFKKIS.

It belongs to the protein kinase superfamily. CAMK Ser/Thr protein kinase family. May interact with centrin.

It is found in the cytoplasm. It carries out the reaction L-seryl-[myosin light chain] + ATP = O-phospho-L-seryl-[myosin light chain] + ADP + H(+). The catalysed reaction is L-threonyl-[myosin light chain] + ATP = O-phospho-L-threonyl-[myosin light chain] + ADP + H(+). Its function is as follows. Implicated in the level of global muscle contraction and cardiac function. Phosphorylates a specific serine in the N-terminus of a myosin light chain. This Bos taurus (Bovine) protein is Myosin light chain kinase 2, skeletal/cardiac muscle (MYLK2).